A 401-amino-acid polypeptide reads, in one-letter code: L-rhamnonate dehydratase (401 aa).

Residues H29 and R55 each coordinate substrate. Mg(2+) contacts are provided by D222, E248, and E276. Catalysis depends on H325, which acts as the Proton acceptor. E345 contributes to the substrate binding site.

This sequence belongs to the mandelate racemase/muconate lactonizing enzyme family. RhamD subfamily. As to quaternary structure, homooctamer; tetramer of dimers. Mg(2+) serves as cofactor.

It catalyses the reaction L-rhamnonate = 2-dehydro-3-deoxy-L-rhamnonate + H2O. Its function is as follows. Catalyzes the dehydration of L-rhamnonate to 2-keto-3-deoxy-L-rhamnonate (KDR). This chain is L-rhamnonate dehydratase, found in Salmonella heidelberg (strain SL476).